The chain runs to 469 residues: Neuraminidase (469 aa).

Residues 1-9 (MNPNQKIIT) are Intravirion-facing. A helical transmembrane segment spans residues 10–30 (IGSVSLTIATVCFLMQIAILV). The involved in apical transport and lipid raft association stretch occupies residues 11 to 33 (GSVSLTIATVCFLMQIAILVTTV). Topologically, residues 31–469 (TTVTLHFKQY…DGANINFMPI (439 aa)) are virion surface. Residues 36–88 (HFKQYECDSPASNQVMPCEPIIIERNITEIVYLNNTTIDKEKCPKVVEYRNWS) are hypervariable stalk region. Residues Asn61, Asn69, Asn70, and Asn86 are each glycosylated (N-linked (GlcNAc...) asparagine; by host). The tract at residues 91–469 (QCQITGFAPF…DGANINFMPI (379 aa)) is head of neuraminidase. Cystine bridges form between Cys92–Cys417, Cys124–Cys129, Cys183–Cys230, Cys232–Cys237, Cys278–Cys291, Cys280–Cys289, Cys318–Cys337, and Cys421–Cys447. Arg118 contacts substrate. The N-linked (GlcNAc...) asparagine; by host glycan is linked to Asn146. The Proton donor/acceptor role is filled by Asp151. Position 152 (Arg152) interacts with substrate. N-linked (GlcNAc...) asparagine; by host glycans are attached at residues Asn200 and Asn234. A substrate-binding site is contributed by 276 to 277 (EE). Arg292 is a substrate binding site. Positions 293, 297, and 324 each coordinate Ca(2+). A disordered region spans residues 324–350 (DTPRNDDRSSNSNCRNPNNERGNQGVK). Residues 333–342 (SNSNCRNPNN) are compositionally biased toward low complexity. Arg371 contributes to the substrate binding site. N-linked (GlcNAc...) asparagine; by host glycosylation occurs at Asn402. The Nucleophile role is filled by Tyr406.

The protein belongs to the glycosyl hydrolase 34 family. In terms of assembly, homotetramer. Ca(2+) is required as a cofactor. Post-translationally, N-glycosylated.

It localises to the virion membrane. Its subcellular location is the host apical cell membrane. The catalysed reaction is Hydrolysis of alpha-(2-&gt;3)-, alpha-(2-&gt;6)-, alpha-(2-&gt;8)- glycosidic linkages of terminal sialic acid residues in oligosaccharides, glycoproteins, glycolipids, colominic acid and synthetic substrates.. With respect to regulation, inhibited by the neuraminidase inhibitors zanamivir (Relenza) and oseltamivir (Tamiflu). These drugs interfere with the release of progeny virus from infected cells and are effective against all influenza strains. Resistance to neuraminidase inhibitors is quite rare. In terms of biological role, catalyzes the removal of terminal sialic acid residues from viral and cellular glycoconjugates. Cleaves off the terminal sialic acids on the glycosylated HA during virus budding to facilitate virus release. Additionally helps virus spread through the circulation by further removing sialic acids from the cell surface. These cleavages prevent self-aggregation and ensure the efficient spread of the progeny virus from cell to cell. Otherwise, infection would be limited to one round of replication. Described as a receptor-destroying enzyme because it cleaves a terminal sialic acid from the cellular receptors. May facilitate viral invasion of the upper airways by cleaving the sialic acid moieties on the mucin of the airway epithelial cells. Likely to plays a role in the budding process through its association with lipid rafts during intracellular transport. May additionally display a raft-association independent effect on budding. Plays a role in the determination of host range restriction on replication and virulence. Sialidase activity in late endosome/lysosome traffic seems to enhance virus replication. In Aves (whales), this protein is Neuraminidase.